We begin with the raw amino-acid sequence, 358 residues long: MSTAIRSGRQSNWGSFCDWVTNTNNRIYVGWFGVLMIPCLLAATICFIIAFVAAPPVDIDGIREPVAGSLIYGNNIISGAVVPSSNAIGLHFYPIWEAASLDEWLYNGGPFQLVVFHFLIGISAYMGRQWELSYRLGMRPWICVAYSAPLSAAFAVFLVYPFGQGSFSDAMPLGISGTFNYMLVFQAEHNILMHPFHMLGVAGVFGGSLFSAMHGSLVTSSLVRETTESESQNYGYKFGQEEETYNIVAAHGYFGRLIFQYASFNNSRSLHFFLGAWPVIGIWFTSMGISTMAFNLNGFNFNQSILDGQGRVVSTWADVLNRAGLGMEVMHERNAHNFPLDLAAAESTPVALQAPAIG.

The next 3 helical transmembrane spans lie at 28–45, 117–132, and 141–155; these read YVGW…AATI, HFLI…QWEL, and WICV…AAFA. His-117 contributes to the chlorophyll a binding site. Tyr-125 is a binding site for pheophytin a. Residues Asp-169 and Glu-188 each coordinate [CaMn4O5] cluster. Residues 196–217 traverse the membrane as a helical segment; sequence FHMLGVAGVFGGSLFSAMHGSL. His-197 contacts chlorophyll a. A quinone-binding positions include His-214 and 263–264; that span reads SF. A Fe cation-binding site is contributed by His-214. Residue His-271 participates in Fe cation binding. Residues 273–287 traverse the membrane as a helical segment; it reads FLGAWPVIGIWFTSM. [CaMn4O5] cluster contacts are provided by His-331, Glu-332, Asp-341, and Ala-343. The propeptide occupies 344 to 358; sequence AAESTPVALQAPAIG.

The protein belongs to the reaction center PufL/M/PsbA/D family. In terms of assembly, PSII is composed of 1 copy each of membrane proteins PsbA, PsbB, PsbC, PsbD, PsbE, PsbF, PsbH, PsbI, PsbJ, PsbK, PsbL, PsbM, PsbT, PsbX, PsbY, PsbZ, Psb30/Ycf12, peripheral proteins PsbO, CyanoQ (PsbQ), PsbU, PsbV and a large number of cofactors. It forms dimeric complexes. It depends on The D1/D2 heterodimer binds P680, chlorophylls that are the primary electron donor of PSII, and subsequent electron acceptors. It shares a non-heme iron and each subunit binds pheophytin, quinone, additional chlorophylls, carotenoids and lipids. D1 provides most of the ligands for the Mn4-Ca-O5 cluster of the oxygen-evolving complex (OEC). There is also a Cl(-1) ion associated with D1 and D2, which is required for oxygen evolution. The PSII complex binds additional chlorophylls, carotenoids and specific lipids. as a cofactor. Post-translationally, tyr-160 forms a radical intermediate that is referred to as redox-active TyrZ, YZ or Y-Z. In terms of processing, C-terminally processed by CtpA; processing is essential to allow assembly of the oxygen-evolving complex and thus photosynthetic growth.

The protein localises to the cellular thylakoid membrane. It carries out the reaction 2 a plastoquinone + 4 hnu + 2 H2O = 2 a plastoquinol + O2. Its function is as follows. Photosystem II (PSII) is a light-driven water:plastoquinone oxidoreductase that uses light energy to abstract electrons from H(2)O, generating O(2) and a proton gradient subsequently used for ATP formation. It consists of a core antenna complex that captures photons, and an electron transfer chain that converts photonic excitation into a charge separation. The D1/D2 (PsbA/PsbD) reaction center heterodimer binds P680, the primary electron donor of PSII as well as several subsequent electron acceptors. This is Photosystem II protein D1 1 from Synechococcus sp. (strain CC9902).